A 212-amino-acid chain; its full sequence is Small ribosomal subunit protein uS5 (212 aa).

Positions 48-111 (LDDEVLDINM…EVAKLNIIDV (64 aa)) constitute an S5 DRBM domain.

The protein belongs to the universal ribosomal protein uS5 family. Part of the 30S ribosomal subunit. Contacts protein S4.

Its function is as follows. With S4 and S12 plays an important role in translational accuracy. The chain is Small ribosomal subunit protein uS5 from Halobacterium salinarum (strain ATCC 700922 / JCM 11081 / NRC-1) (Halobacterium halobium).